Consider the following 241-residue polypeptide: Glucosamine-6-phosphate deaminase (241 aa).

The Proton acceptor; for enolization step role is filled by aspartate 67. The active-site For ring-opening step is asparagine 136. Histidine 138 serves as the catalytic Proton acceptor; for ring-opening step. The active-site For ring-opening step is glutamate 143.

Belongs to the glucosamine/galactosamine-6-phosphate isomerase family. NagB subfamily.

The enzyme catalyses alpha-D-glucosamine 6-phosphate + H2O = beta-D-fructose 6-phosphate + NH4(+). It functions in the pathway amino-sugar metabolism; N-acetylneuraminate degradation; D-fructose 6-phosphate from N-acetylneuraminate: step 5/5. Its function is as follows. Catalyzes the reversible isomerization-deamination of glucosamine 6-phosphate (GlcN6P) to form fructose 6-phosphate (Fru6P) and ammonium ion. This Clostridium acetobutylicum (strain ATCC 824 / DSM 792 / JCM 1419 / IAM 19013 / LMG 5710 / NBRC 13948 / NRRL B-527 / VKM B-1787 / 2291 / W) protein is Glucosamine-6-phosphate deaminase.